The chain runs to 53 residues: Small, acid-soluble spore protein K (53 aa).

The interval Met-1 to Glu-53 is disordered.

This sequence belongs to the SspK family.

It localises to the spore core. This is Small, acid-soluble spore protein K from Bacillus cytotoxicus (strain DSM 22905 / CIP 110041 / 391-98 / NVH 391-98).